An 876-amino-acid polypeptide reads, in one-letter code: Translation initiation factor IF-2 (876 aa).

Residues Thr-378 to Lys-547 enclose the tr-type G domain. The tract at residues Gly-387–Thr-394 is G1. Gly-387–Thr-394 contributes to the GTP binding site. The interval Arg-412 to His-416 is G2. Residues Asp-433–Gly-436 are G3. GTP is bound by residues Asp-433–His-437 and Asn-487–Asp-490. Residues Asn-487–Asp-490 are G4. The G5 stretch occupies residues Ser-523 to Lys-525.

Belongs to the TRAFAC class translation factor GTPase superfamily. Classic translation factor GTPase family. IF-2 subfamily.

The protein localises to the cytoplasm. Functionally, one of the essential components for the initiation of protein synthesis. Protects formylmethionyl-tRNA from spontaneous hydrolysis and promotes its binding to the 30S ribosomal subunits. Also involved in the hydrolysis of GTP during the formation of the 70S ribosomal complex. In Buchnera aphidicola subsp. Baizongia pistaciae (strain Bp), this protein is Translation initiation factor IF-2.